Here is a 365-residue protein sequence, read N- to C-terminus: IgG receptor FcRn large subunit p51 (365 aa).

Positions 1–23 are cleaved as a signal peptide; sequence MGVPRPQPWALGLLLFLLPGSLG. The segment at 24–110 is alpha-1; sequence AESHLSLLYH…AFKALGGKGP (87 aa). Over 24-297 the chain is Extracellular; it reads AESHLSLLYH…VELESPAKSS (274 aa). The alpha-2 stretch occupies residues 111–200; that stretch reads YTLQGLLGCE…ERGRGNLEWK (90 aa). Intrachain disulfides connect cysteine 119–cysteine 182 and cysteine 221–cysteine 275. The N-linked (GlcNAc...) asparagine glycan is linked to asparagine 125. The tract at residues 201–290 is alpha-3; the sequence is EPPSMRLKAR…GLAQPLRVEL (90 aa). Residues 202-289 enclose the Ig-like C1-type domain; sequence PPSMRLKARP…AGLAQPLRVE (88 aa). A connecting peptide region spans residues 291-297; that stretch reads ESPAKSS. The helical transmembrane segment at 298-321 threads the bilayer; that stretch reads VLVVGIVIGVLLLTAAAVGGALLW. The Cytoplasmic portion of the chain corresponds to 322–365; it reads RRMRSGLPAPWISLRGDDTGVLLPTPGEAQDADLKDVNVIPATA. Serine 334 bears the Phosphoserine mark.

The protein belongs to the immunoglobulin superfamily. As to quaternary structure, fcRn complex consists of two subunits: p51, and p14 which is equivalent to beta-2-microglobulin. It forms an MHC class I-like heterodimer. Interacts with albumin/ALB; this interaction regulates ALB homeostasis. (Microbial infection) Interacts with Echovirus 6, Echovirus 11 and Echovirus 30 capsid protein VP1. As to expression, expressed in full-term placenta, heart, lung, liver, muscle, kidney, pancreas, and both fetal and adult small intestine.

Its subcellular location is the cell membrane. It is found in the endosome membrane. Cell surface receptor that transfers passive humoral immunity from the mother to the newborn. Binds to the Fc region of monomeric immunoglobulin gamma and mediates its selective uptake from milk. IgG in the milk is bound at the apical surface of the intestinal epithelium. The resultant FcRn-IgG complexes are transcytosed across the intestinal epithelium and IgG is released from FcRn into blood or tissue fluids. Throughout life, contributes to effective humoral immunity by recycling IgG and extending its half-life in the circulation. Mechanistically, monomeric IgG binding to FcRn in acidic endosomes of endothelial and hematopoietic cells recycles IgG to the cell surface where it is released into the circulation. In addition of IgG, regulates homeostasis of the other most abundant circulating protein albumin/ALB. In terms of biological role, (Microbial infection) Acts as an uncoating receptor for a panel of echoviruses including Echovirus 5, 6, 7, 9, 11, 13, 25 and 29. The sequence is that of IgG receptor FcRn large subunit p51 (FCGRT) from Homo sapiens (Human).